Consider the following 377-residue polypeptide: Guanine nucleotide-binding protein subunit alpha-13 (377 aa).

S-palmitoyl cysteine attachment occurs at residues cysteine 14 and cysteine 18. Positions 47–377 constitute a G-alpha domain; sequence RLVKILLLGA…HDNLKQLMLQ (331 aa). The segment at 50–63 is G1 motif; it reads KILLLGAGESGKST. Residues 58–63, serine 173, and 197–200 each bind GTP; these read ESGKST and LLAR. Serine 62 contributes to the Mg(2+) binding site. Residues 195 to 203 are G2 motif; sequence DILLARRPT. Threonine 203 contributes to the Mg(2+) binding site. Threonine 203 bears the Phosphothreonine mark. The segment at 218-227 is G3 motif; it reads FKMVDVGGQR. Positions 287 to 294 are G4 motif; it reads ILFLNKTD. Residues 291–294 and alanine 349 each bind GTP; that span reads NKTD. The segment at 347–352 is G5 motif; the sequence is TTAINT.

It belongs to the G-alpha family. G(12) subfamily. G proteins are composed of 3 units; alpha, beta and gamma. The alpha chain contains the guanine nucleotide binding site. Interacts with UBXD5. Interacts with HAX1. Interacts (in GTP-bound form) with PPP5C (via TPR repeats); activates PPP5C phosphatase activity and translocates PPP5C to the cell membrane. Interacts with RGS22. Interacts (in GTP-bound form) with ARHGEF1. Interacts (in GTP-bound form) with ARHGEF11 (via RGS domain). Interacts (in GTP-bound form) with ARHGEF12 (via RGS domain). Interacts with CTNND1. Interacts with GAS2L2. Interacts with GPR35. Interacts with GPR174. Phosphorylation on Thr-203 destabilizes the heterotrimer of alpha, beta and gamma, and inhibits Rho activation. As to expression, expressed in brain and testis, as well as in kidney and sperm (at protein level).

The protein resides in the membrane. It is found in the melanosome. It localises to the cytoplasm. Its subcellular location is the nucleus. Its function is as follows. Guanine nucleotide-binding proteins (G proteins) are involved as modulators or transducers in various transmembrane signaling systems. Activates effector molecule RhoA by binding and activating RhoGEFs (ARHGEF1/p115RhoGEF, ARHGEF11/PDZ-RhoGEF and ARHGEF12/LARG). GNA13-dependent Rho signaling subsequently regulates transcription factor AP-1 (activating protein-1). Promotes tumor cell invasion and metastasis by activating Rho/ROCK signaling pathway. Inhibits CDH1-mediated cell adhesion in a process independent from Rho activation. In lymphoid follicles, transmits P2RY8- and S1PR2-dependent signals that lead to inhibition of germinal center (GC) B cell growth and migration outside the GC niche. This chain is Guanine nucleotide-binding protein subunit alpha-13 (Gna13), found in Mus musculus (Mouse).